A 61-amino-acid polypeptide reads, in one-letter code: Small ribosomal subunit protein uS14 (61 aa).

Zn(2+) contacts are provided by cysteine 24, cysteine 27, cysteine 40, and cysteine 43.

The protein belongs to the universal ribosomal protein uS14 family. Zinc-binding uS14 subfamily. Part of the 30S ribosomal subunit. Contacts proteins S3 and S10. The cofactor is Zn(2+).

Functionally, binds 16S rRNA, required for the assembly of 30S particles and may also be responsible for determining the conformation of the 16S rRNA at the A site. The sequence is that of Small ribosomal subunit protein uS14 from Malacoplasma penetrans (strain HF-2) (Mycoplasma penetrans).